The following is a 119-amino-acid chain: MSPRKTYILKLYVAGNTPNSMRALKTLRDILENEFRGVYALKVIDVLKNPQLAEEDKILATPTLAKILPPPVRRIIGDLSDRERVLIGLDLLYDEISEEMLGSAELDTLADDDIASPDS.

It belongs to the KaiB family. As to quaternary structure, may undergo a major conformational rearrangment; in the free state forms homooligomers. When bound to KaiC switches to a monomeric thioredoxin-fold (KaiB(fs)). The active oscillator complex is probably KaiC(6):KaiB(6).

In terms of biological role, component of the KaiBC clock protein complex, which constitutes the main circadian regulator in cyanobacteria; it may modify the ATPase activity of KaiC. Functionally, may be a metamorphic protein which reversibly switches between an inactive tetrameric fold and a rare, thioredoxin-like monomeric fold (KaiB(fs)). KaiB(fs) binds phospho-KaiC, and perhaps clock output effectors. This is Circadian clock oscillator protein KaiB from Prochlorococcus marinus (strain MIT 9303).